The following is a 64-amino-acid chain: Large ribosomal subunit protein bL35 (64 aa).

Belongs to the bacterial ribosomal protein bL35 family.

This chain is Large ribosomal subunit protein bL35, found in Colwellia psychrerythraea (strain 34H / ATCC BAA-681) (Vibrio psychroerythus).